The sequence spans 712 residues: Ribosomal RNA large subunit methyltransferase K/L (712 aa).

The 112-residue stretch at 42 to 153 (QALRIVMWSR…KGRASLSIDL (112 aa)) folds into the THUMP domain.

This sequence belongs to the methyltransferase superfamily. RlmKL family.

It localises to the cytoplasm. It carries out the reaction guanosine(2445) in 23S rRNA + S-adenosyl-L-methionine = N(2)-methylguanosine(2445) in 23S rRNA + S-adenosyl-L-homocysteine + H(+). The catalysed reaction is guanosine(2069) in 23S rRNA + S-adenosyl-L-methionine = N(2)-methylguanosine(2069) in 23S rRNA + S-adenosyl-L-homocysteine + H(+). In terms of biological role, specifically methylates the guanine in position 2445 (m2G2445) and the guanine in position 2069 (m7G2069) of 23S rRNA. This chain is Ribosomal RNA large subunit methyltransferase K/L, found in Stenotrophomonas maltophilia (strain K279a).